We begin with the raw amino-acid sequence, 240 residues long: Acyl-protein thioesterase 1 (240 aa).

Residues serine 129, aspartate 183, and histidine 219 each act as charge relay system in the active site.

It belongs to the AB hydrolase superfamily. AB hydrolase 2 family.

The protein resides in the cytoplasm. It is found in the nucleus. It catalyses the reaction S-hexadecanoyl-L-cysteinyl-[protein] + H2O = L-cysteinyl-[protein] + hexadecanoate + H(+). In terms of biological role, hydrolyzes fatty acids from S-acylated cysteine residues in proteins with a strong preference for palmitoylated G-alpha proteins over other acyl substrates. Mediates the deacylation of G-alpha proteins such as GPA1 in vivo, but has weak or no activity toward palmitoylated Ras proteins. Has weak lysophospholipase activity in vitro; however such activity may not exist in vivo. This is Acyl-protein thioesterase 1 from Mycosarcoma maydis (Corn smut fungus).